Here is a 302-residue protein sequence, read N- to C-terminus: Protoheme IX farnesyltransferase 1 (302 aa).

The next 8 membrane-spanning stretches (helical) occupy residues 27 to 47 (VVALMLVTAIVGMSLAPVTDF), 49 to 69 (WIQASIGLIGIGLMAGSAAAF), 98 to 118 (SVAIFAVAIGVVGFVLLYAWV), 121 to 141 (LTAWMTFLSLLGYAVVYTMYL), 149 to 169 (IVIAGIAGAMPPLLGWTAVTG), 175 to 195 (AWLLVMIIFIWTPPHFWALAI), 228 to 248 (LLTLVCVMPVLVGMVGFIYLF), and 281 to 301 (IYHLLALFVALLADHYIGMVL).

It belongs to the UbiA prenyltransferase family. Protoheme IX farnesyltransferase subfamily.

Its subcellular location is the cell inner membrane. The catalysed reaction is heme b + (2E,6E)-farnesyl diphosphate + H2O = Fe(II)-heme o + diphosphate. The protein operates within porphyrin-containing compound metabolism; heme O biosynthesis; heme O from protoheme: step 1/1. Converts heme B (protoheme IX) to heme O by substitution of the vinyl group on carbon 2 of heme B porphyrin ring with a hydroxyethyl farnesyl side group. The polypeptide is Protoheme IX farnesyltransferase 1 (Vibrio parahaemolyticus serotype O3:K6 (strain RIMD 2210633)).